The sequence spans 476 residues: UDP-glucose 6-dehydrogenase (476 aa).

NAD(+) is bound by residues 7–12 (GAGYVG), aspartate 32, arginine 37, 85–89 (VNTPT), 126–127 (ST), and glutamate 161. Residues 157–161 (EFLAE), 216–220 (KLAAN), arginine 256, and 263–269 (QASVGFG) contribute to the substrate site. Cysteine 272 acts as the Nucleophile in catalysis. NAD(+) is bound at residue 272–275 (CFQK). 334 to 335 (FK) contributes to the substrate binding site. Arginine 342 is an NAD(+) binding site. A substrate-binding site is contributed by arginine 439.

This sequence belongs to the UDP-glucose/GDP-mannose dehydrogenase family.

It carries out the reaction UDP-alpha-D-glucose + 2 NAD(+) + H2O = UDP-alpha-D-glucuronate + 2 NADH + 3 H(+). Its pathway is nucleotide-sugar biosynthesis; UDP-alpha-D-glucuronate biosynthesis; UDP-alpha-D-glucuronate from UDP-alpha-D-glucose: step 1/1. Its function is as follows. Involved in the biosynthesis of glycosaminoglycans; hyaluronan, chondroitin sulfate and heparan sulfate. Required for wingless signaling in different tissues. The protein is UDP-glucose 6-dehydrogenase (sgl) of Drosophila melanogaster (Fruit fly).